Consider the following 467-residue polypeptide: MMESYDVIVIGAGPGGYNAAIRAGQLGLKVACVEGRETLGGTCLNVGCMPSKALLHASELYAAASGGEFARLGIRVSPELDLAQMMKQKDESVAALTRGVEFLFRKHKVQWIKGWARLQGEGRVGVALADGGHAQLEARDIVIATGSEPAPLPGVPVDNQRILDSTGALELVEVPRHLVVIGAGVIGLELGSVWRRLGAQVTVLEYLERICPGLDGETARTLQRALTRQGMRFRLGTRVVAARSGEQGVELDLQPAAGGATESLQADYVLVAIGRRPYTEGLGLETVGLASDRRGMLENQGQRSAAPGVWVIGDVTSGPMLAHKAEEEAIVCIERIAGHAAEMNAEVIPSVIYTQPEVASVGLGEEQLQAARREYKVGRFPFSANSRAKINHESEGFIKILSDARSDQVLGVHMIGPGVSEMIGEACVAMEFSASAEDLALTCHPHPTRSEALRQAAMDVHGRAMQN.

FAD is bound by residues 34–43, Lys52, and Ala116; that span reads EGRETLGGTC. Cys43 and Cys48 are disulfide-bonded. NAD(+) contacts are provided by residues 182–186, Glu205, Val239, and 272–275; these read GAGVI and AIGR. FAD is bound by residues Asp314 and Ala322. The active-site Proton acceptor is the His446.

It belongs to the class-I pyridine nucleotide-disulfide oxidoreductase family. As to quaternary structure, homodimer. It depends on FAD as a cofactor.

Its subcellular location is the cytoplasm. It catalyses the reaction N(6)-[(R)-dihydrolipoyl]-L-lysyl-[protein] + NAD(+) = N(6)-[(R)-lipoyl]-L-lysyl-[protein] + NADH + H(+). LPD-3 may substitute for lipoamide dehydrogenase of the 2-oxoglutarate dehydrogenase and pyruvate multienzyme complexes when the latter is inactive or missing. The polypeptide is Dihydrolipoyl dehydrogenase 3 (lpd3) (Pseudomonas aeruginosa (strain ATCC 15692 / DSM 22644 / CIP 104116 / JCM 14847 / LMG 12228 / 1C / PRS 101 / PAO1)).